The chain runs to 184 residues: Ribosome-recycling factor (184 aa).

It belongs to the RRF family.

Its subcellular location is the cytoplasm. Functionally, responsible for the release of ribosomes from messenger RNA at the termination of protein biosynthesis. May increase the efficiency of translation by recycling ribosomes from one round of translation to another. This Aquifex aeolicus (strain VF5) protein is Ribosome-recycling factor.